The chain runs to 305 residues: Probable L-ribulose-5-phosphate 3-epimerase UlaE (305 aa).

This sequence belongs to the L-ribulose-5-phosphate 3-epimerase family.

The catalysed reaction is L-ribulose 5-phosphate = L-xylulose 5-phosphate. The protein operates within cofactor degradation; L-ascorbate degradation; D-xylulose 5-phosphate from L-ascorbate: step 3/4. Its function is as follows. Catalyzes the isomerization of L-xylulose-5-phosphate to L-ribulose-5-phosphate. Is involved in the anaerobic L-ascorbate utilization. This is Probable L-ribulose-5-phosphate 3-epimerase UlaE (ulaE) from Mycoplasma pneumoniae (strain ATCC 29342 / M129 / Subtype 1) (Mycoplasmoides pneumoniae).